The chain runs to 667 residues: MIHELLLALSGYPGSIFTWNKRSGLQVSQDFPFLHPSETSVLNRLCRLGTDYIRFTEFIEQYTGHVQQQDHHPPQQGQGGLHGIYLRAFCTGLDSVLQPYRQALLDLEQEFLADPHLSISHVNYSLDQFQLLFPSVMVVVEQIKSQKIHGCQILETVYKHSCGGLPPVRSALEKILAVCHGVMYKQLSAWMLHGLLLDQHEEFFIKQGPSSGTLSAQLEEDEEDLGIGGLTGKQLRELQDLRLIEEENMLAPSLKQFSLRVEILPSYIPVRVAEKILFVGESVQMFENQNVNLTRKGSILKNQEDTFAAELHRLKQQPLFSLVDFEQVVDRIRSTVAEHLWKLMVEESDLLGQLKIIKDFYLLGRGELFQAFIDTAQHMLKTPPTAVTEHDVNVAFQQSAHKVLLDDDNLLPLLHLTIEYHGKDHKADATQPREVPSRETSPREAPSSGWAALGLSYKVQWPLHILFTPAVLEKYNVVFKYLLSVRRVQAELQHCWALQMQRKHLKSNQTDAVKWRLRNHMAFLVDNLQYYLQVDVLESQFSQLLHQINSTRDFESIRLAHDHFLSNLLAQSFILLKPVFHCLNEILDLCHSFCSLVSQNLGPLDERGAAQLSILVKGFSRQSSLLFKILSSVRNHQINSDLAQLLLRLDYNKYYTQAGGTLGSFGM.

Positions 424 to 446 (DHKADATQPREVPSRETSPREAP) are disordered.

Belongs to the TUBGCP family. As to quaternary structure, component of the gamma-tubulin ring complex (gTuRC) consisting of TUBGCP2, TUBGCP3, TUBGCP4, TUBGCP5 and TUBGCP6 and gamma-tubulin TUBG1 or TUBG2. TUBGCP2, TUBGCP3, TUBGCP4, TUBGCP5 and TUBGCP6 assemble in a 5:5:2:1:1 stoichiometry; each is associated with a gamma-tubulin, thereby arranging 14 gamma-tubulins in a helical manner. Gamma-tubulin at the first position is blocked by TUBGCP3 at the last position, allowing 13 protafilaments to grow into a microtubule. The gTuRC (via TUBGCP3 and TUBGCP6) interacts with ACTB and MZT1; the interactions form a luminal bridge that stabilizes the initial structure during complex assembly. The gTuRC (via TUBGCP2) interacts with MZT2A/MZT2B and CDK5RAP2 (via CM1 motif); the interactions play a role in gTuRC activation. Interacts with NINL. Interacts with ATF5; the ATF5:PCNT:polyglutamylated tubulin (PGT) tripartite unites the mother centriole and the pericentriolar material (PCM) in the centrosome.

It localises to the cytoplasm. It is found in the cytoskeleton. The protein localises to the microtubule organizing center. The protein resides in the centrosome. Its function is as follows. Component of the gamma-tubulin ring complex (gTuRC) which mediates microtubule nucleation. The gTuRC regulates the minus-end nucleation of alpha-beta tubulin heterodimers that grow into microtubule protafilaments, a critical step in centrosome duplication and spindle formation. The protein is Gamma-tubulin complex component 4 (Tubgcp4) of Mus musculus (Mouse).